The chain runs to 157 residues: Cytochrome c-type biogenesis protein CcmE (157 aa).

The Cytoplasmic portion of the chain corresponds to 1–8 (MNPLRRKR). Residues 9 to 29 (LLIILAVLGGVGLALTLALSA) form a helical; Signal-anchor for type II membrane protein membrane-spanning segment. The Periplasmic segment spans residues 30 to 157 (LKENINLFYT…ASMPARQADR (128 aa)). Heme-binding residues include histidine 124 and tyrosine 128. Positions 132-157 (EVSKALRESGQATPAPASMPARQADR) are disordered.

This sequence belongs to the CcmE/CycJ family.

It is found in the cell inner membrane. Its function is as follows. Heme chaperone required for the biogenesis of c-type cytochromes. Transiently binds heme delivered by CcmC and transfers the heme to apo-cytochromes in a process facilitated by CcmF and CcmH. This chain is Cytochrome c-type biogenesis protein CcmE, found in Pseudomonas syringae pv. tomato (strain ATCC BAA-871 / DC3000).